We begin with the raw amino-acid sequence, 506 residues long: Maturase K (506 aa).

It belongs to the intron maturase 2 family. MatK subfamily.

The protein localises to the plastid. Its subcellular location is the chloroplast. Its function is as follows. Usually encoded in the trnK tRNA gene intron. Probably assists in splicing its own and other chloroplast group II introns. This Hydrangea macrophylla (Bigleaf hydrangea) protein is Maturase K.